The following is a 243-amino-acid chain: 7-carboxy-7-deazaguanine synthase (243 aa).

Substrate is bound by residues 9 to 11 (IMG) and R24. One can recognise a Radical SAM core domain in the interval 15 to 243 (YIGRRFIFVR…IQMHKYLGML (229 aa)). [4Fe-4S] cluster is bound by residues C28, C32, and C35. Residue T84 participates in substrate binding. Residue G86 participates in S-adenosyl-L-methionine binding.

It belongs to the radical SAM superfamily. 7-carboxy-7-deazaguanine synthase family. In terms of assembly, homodimer. Requires [4Fe-4S] cluster as cofactor. It depends on S-adenosyl-L-methionine as a cofactor. Mg(2+) serves as cofactor.

The enzyme catalyses 6-carboxy-5,6,7,8-tetrahydropterin + H(+) = 7-carboxy-7-deazaguanine + NH4(+). It functions in the pathway purine metabolism; 7-cyano-7-deazaguanine biosynthesis. Functionally, catalyzes the complex heterocyclic radical-mediated conversion of 6-carboxy-5,6,7,8-tetrahydropterin (CPH4) to 7-carboxy-7-deazaguanine (CDG), a step common to the biosynthetic pathways of all 7-deazapurine-containing compounds. This chain is 7-carboxy-7-deazaguanine synthase, found in Methanocaldococcus jannaschii (strain ATCC 43067 / DSM 2661 / JAL-1 / JCM 10045 / NBRC 100440) (Methanococcus jannaschii).